The following is a 351-amino-acid chain: MGNEKARVGIIGASGYGGIQLVRLLLEHPQVELTYLAGHSSAGKPYSDLYPHLTHRVNLTIEPIDLEAIASRCDAVFLGLPNGLACDMAPALLAKGCKVLDLSADYRFRNLNTYTEWYKKDRQDQATNNQAVYGLPELYRDAIRDAQLIGCPGCYPTASLLALSPLLKQGFIVPETAIIDAKSGTSGGGREAKVNMLLAEAEGSLGAYGVAKHRHTPEIEQIASDLAGTELRVQFTPHLIPMVRGILATVYATLRDPGLVRDDLITIYSAFYRASPFVKILPHGVYPQTKWAWGTNLCYIGIEVDPRTGRVIVLSAIDNLVKGQAGQAVQCLNLMMGWEESLGLPQLAFYP.

The active site involves Cys154.

This sequence belongs to the NAGSA dehydrogenase family. Type 1 subfamily.

It is found in the cytoplasm. It carries out the reaction N-acetyl-L-glutamate 5-semialdehyde + phosphate + NADP(+) = N-acetyl-L-glutamyl 5-phosphate + NADPH + H(+). The protein operates within amino-acid biosynthesis; L-arginine biosynthesis; N(2)-acetyl-L-ornithine from L-glutamate: step 3/4. In terms of biological role, catalyzes the NADPH-dependent reduction of N-acetyl-5-glutamyl phosphate to yield N-acetyl-L-glutamate 5-semialdehyde. The polypeptide is N-acetyl-gamma-glutamyl-phosphate reductase (Synechocystis sp. (strain ATCC 27184 / PCC 6803 / Kazusa)).